Here is a 261-residue protein sequence, read N- to C-terminus: Proteasome subunit alpha (261 aa).

Residues N242 to E261 are disordered.

The protein belongs to the peptidase T1A family. As to quaternary structure, the 20S proteasome core is composed of 14 alpha and 14 beta subunits that assemble into four stacked heptameric rings, resulting in a barrel-shaped structure. The two inner rings, each composed of seven catalytic beta subunits, are sandwiched by two outer rings, each composed of seven alpha subunits. The catalytic chamber with the active sites is on the inside of the barrel. Has a gated structure, the ends of the cylinder being occluded by the N-termini of the alpha-subunits. Is capped at one or both ends by the proteasome regulatory ATPase, PAN.

The protein localises to the cytoplasm. The formation of the proteasomal ATPase PAN-20S proteasome complex, via the docking of the C-termini of PAN into the intersubunit pockets in the alpha-rings, triggers opening of the gate for substrate entry. Interconversion between the open-gate and close-gate conformations leads to a dynamic regulation of the 20S proteasome proteolysis activity. Functionally, component of the proteasome core, a large protease complex with broad specificity involved in protein degradation. The M.jannaschii proteasome is able to cleave oligopeptides after Glu, Asp, Tyr, Phe, Trp, slightly after Arg, but not after Ala. Thus, displays caspase-like and chymotrypsin-like activities and low level of trypsin-like activity. In Methanocaldococcus jannaschii (strain ATCC 43067 / DSM 2661 / JAL-1 / JCM 10045 / NBRC 100440) (Methanococcus jannaschii), this protein is Proteasome subunit alpha.